A 384-amino-acid polypeptide reads, in one-letter code: Formate-dependent phosphoribosylglycinamide formyltransferase (384 aa).

N(1)-(5-phospho-beta-D-ribosyl)glycinamide is bound by residues 14 to 15 (EL) and Glu-74. ATP contacts are provided by residues Arg-106, Lys-147, 152–157 (SSGKGQ), 187–190 (EEFI), and Glu-195. The ATP-grasp domain maps to 111-300 (RLAAETLHLP…EFALHVRAVL (190 aa)). Mg(2+) contacts are provided by Glu-259 and Glu-271. Residues Asp-278, Lys-348, and 355–356 (RR) each bind N(1)-(5-phospho-beta-D-ribosyl)glycinamide.

It belongs to the PurK/PurT family. In terms of assembly, homodimer.

The catalysed reaction is N(1)-(5-phospho-beta-D-ribosyl)glycinamide + formate + ATP = N(2)-formyl-N(1)-(5-phospho-beta-D-ribosyl)glycinamide + ADP + phosphate + H(+). It participates in purine metabolism; IMP biosynthesis via de novo pathway; N(2)-formyl-N(1)-(5-phospho-D-ribosyl)glycinamide from N(1)-(5-phospho-D-ribosyl)glycinamide (formate route): step 1/1. In terms of biological role, involved in the de novo purine biosynthesis. Catalyzes the transfer of formate to 5-phospho-ribosyl-glycinamide (GAR), producing 5-phospho-ribosyl-N-formylglycinamide (FGAR). Formate is provided by PurU via hydrolysis of 10-formyl-tetrahydrofolate. The polypeptide is Formate-dependent phosphoribosylglycinamide formyltransferase (Bacillus velezensis (strain DSM 23117 / BGSC 10A6 / LMG 26770 / FZB42) (Bacillus amyloliquefaciens subsp. plantarum)).